A 692-amino-acid chain; its full sequence is Elongation factor G (692 aa).

A tr-type G domain is found at 8 to 282 (ENTRNIGIMA…AVIDYLPSPL (275 aa)). GTP-binding positions include 17 to 24 (AHIDAGKT), 81 to 85 (DTPGH), and 135 to 138 (NKMD).

The protein belongs to the TRAFAC class translation factor GTPase superfamily. Classic translation factor GTPase family. EF-G/EF-2 subfamily.

It localises to the cytoplasm. Catalyzes the GTP-dependent ribosomal translocation step during translation elongation. During this step, the ribosome changes from the pre-translocational (PRE) to the post-translocational (POST) state as the newly formed A-site-bound peptidyl-tRNA and P-site-bound deacylated tRNA move to the P and E sites, respectively. Catalyzes the coordinated movement of the two tRNA molecules, the mRNA and conformational changes in the ribosome. The sequence is that of Elongation factor G from Bacillus cereus (strain ZK / E33L).